Here is a 725-residue protein sequence, read N- to C-terminus: ATP-dependent DNA helicase II subunit 2 (725 aa).

A Ku domain is found at 232–478 (LTLGDPQKYP…QQAMSDYVDA (247 aa)).

Belongs to the ku80 family. Heterodimer of mus-51/ku70 and mus-52/ku80.

The protein resides in the nucleus. The protein localises to the chromosome. It localises to the telomere. The catalysed reaction is ATP + H2O = ADP + phosphate + H(+). In terms of biological role, single-stranded DNA-dependent ATP-dependent helicase. Involved in non-homologous end joining (NHEJ) DNA double strand break repair. DNA-binding is sequence-independent but has a high affinity to nicks in double-stranded DNA and to the ends of duplex DNA. Binds to naturally occurring chromosomal ends, and therefore provides chromosomal end protection. Required also for telomere recombination to repair telomeric ends in the absence of telomerase. ku70, of the ku70/ku80 heterodimer, binds to the stem loop of tlc1, the RNA component of telomerase. Involved in telomere maintenance. Interacts with telomeric repeats and subtelomeric sequences thereby controlling telomere length and protecting against subtelomeric rearrangement. Maintains telomeric chromatin, which is involved in silencing the expression of genes located at the telomere. Required for mating-type switching. In Neurospora crassa (strain ATCC 24698 / 74-OR23-1A / CBS 708.71 / DSM 1257 / FGSC 987), this protein is ATP-dependent DNA helicase II subunit 2 (mus-52).